The chain runs to 530 residues: Bifunctional purine biosynthesis protein PurH (530 aa).

One can recognise an MGS-like domain in the interval 1-148 (MNNARPIHRA…KNHKDVAIVV (148 aa)).

The protein belongs to the PurH family.

It catalyses the reaction (6R)-10-formyltetrahydrofolate + 5-amino-1-(5-phospho-beta-D-ribosyl)imidazole-4-carboxamide = 5-formamido-1-(5-phospho-D-ribosyl)imidazole-4-carboxamide + (6S)-5,6,7,8-tetrahydrofolate. The catalysed reaction is IMP + H2O = 5-formamido-1-(5-phospho-D-ribosyl)imidazole-4-carboxamide. Its pathway is purine metabolism; IMP biosynthesis via de novo pathway; 5-formamido-1-(5-phospho-D-ribosyl)imidazole-4-carboxamide from 5-amino-1-(5-phospho-D-ribosyl)imidazole-4-carboxamide (10-formyl THF route): step 1/1. It functions in the pathway purine metabolism; IMP biosynthesis via de novo pathway; IMP from 5-formamido-1-(5-phospho-D-ribosyl)imidazole-4-carboxamide: step 1/1. This is Bifunctional purine biosynthesis protein PurH from Vibrio cholerae serotype O1 (strain ATCC 39541 / Classical Ogawa 395 / O395).